The following is a 363-amino-acid chain: Pyrimidine monooxygenase RutA (363 aa).

Residues 49–50, Asn115, Glu124, 140–141, and Ser190 each bind FMN; these read IK and RY.

This sequence belongs to the NtaA/SnaA/DszA monooxygenase family. RutA subfamily.

The catalysed reaction is uracil + FMNH2 + NADH + O2 = (Z)-3-ureidoacrylate + FMN + NAD(+) + H2O + H(+). It catalyses the reaction thymine + FMNH2 + NADH + O2 = (Z)-2-methylureidoacrylate + FMN + NAD(+) + H2O + H(+). Functionally, catalyzes the pyrimidine ring opening between N-3 and C-4 by an unusual flavin hydroperoxide-catalyzed mechanism, adding oxygen atoms in the process to yield ureidoacrylate peracid, that immediately reacts with FMN forming ureidoacrylate and FMN-N(5)-oxide. The FMN-N(5)-oxide reacts spontaneously with NADH to produce FMN. Requires the flavin reductase RutF to regenerate FMN in vivo. The protein is Pyrimidine monooxygenase RutA of Klebsiella pneumoniae (strain 342).